Reading from the N-terminus, the 164-residue chain is Interferon gamma (164 aa).

An N-terminal signal peptide occupies residues 1–19 (MTCQTYNLFVLSVIMIYYG). Asn-42 and Asn-61 each carry an N-linked (GlcNAc...) asparagine glycan.

It belongs to the type II (or gamma) interferon family. In terms of assembly, homodimer.

Its subcellular location is the secreted. Produced by lymphocytes activated by specific antigens or mitogens. IFN-gamma, in addition to having antiviral activity, has important immunoregulatory functions. It is a potent activator of macrophages, it has antiproliferative effects on transformed cells and it can potentiate the antiviral and antitumor effects of the type I interferons. This chain is Interferon gamma (IFNG), found in Gallus gallus (Chicken).